A 119-amino-acid polypeptide reads, in one-letter code: Protein FAM24A-like (119 aa).

The signal sequence occupies residues 1-40 (MYKPFDLRTIITIIIGCGILTAMFLLIGLVLCLYSKISKA).

Belongs to the FAM24 family.

It localises to the secreted. In Mus musculus (Mouse), this protein is Protein FAM24A-like.